A 570-amino-acid polypeptide reads, in one-letter code: Ribosome-inactivating protein SNAIf (570 aa).

Positions 1-28 are cleaved as a signal peptide; that stretch reads MRVVTKLLYLVVLAICGLGIHGALTHTR. N-linked (GlcNAc...) asparagine glycosylation is found at asparagine 40, asparagine 62, and asparagine 140. Glutamate 199 is an active-site residue. A glycan (N-linked (GlcNAc...) asparagine) is linked at asparagine 232. Cystine bridges form between cysteine 284-cysteine 316, cysteine 332-cysteine 351, and cysteine 373-cysteine 385. 2 Ricin B-type lectin domains span residues 319–439 and 441–566; these read VEVT…WTVG and VEPL…WITT. One copy of the 1-alpha repeat lies at 329–369; the sequence is DGLCVDVRDGHYIDGNTVQLGPCGNECNQLWTFRTDGTIRW. The stretch at 370-405 is one 1-beta repeat; the sequence is LGKCLTTSSSVMIYDCNTVPPEATKWVVSTDGTITN. Residues 408–440 form a 1-gamma repeat; that stretch reads SGLVLTAPQAAEGTALSLENNIHAARQGWTVGD. Residues 452-489 form a 2-alpha repeat; the sequence is KQMCLTENGENNFVWLEDCVLNRVEQEWALYGDGTIRV. A disulfide bridge links cysteine 455 with cysteine 470. The N-linked (GlcNAc...) asparagine glycan is linked to asparagine 492. The 2-beta repeat unit spans residues 493–531; sequence RSLCVTSEDHEPSDLIVILKCEGSGNQRWVFNTNGTISN. A disulfide bridge links cysteine 496 with cysteine 513. Residues asparagine 526 and asparagine 544 are each glycosylated (N-linked (GlcNAc...) asparagine). The 2-gamma repeat unit spans residues 534–567; the sequence is AKLVMDVAQSNVSLRKIILYPPTGNPNQQWITTT.

It belongs to the ribosome-inactivating protein family. Type 2 RIP subfamily. Tetramer of four pairs of disulfide bound A-B chains. The precursor is processed in two chains, A and B, that are linked by a disulfide bond. A small truncated form corresponding roughly to the second ricin B-type lectin domain of the B chain, TrSNAIf, can also be produced. In terms of processing, N-glycosylated. In terms of tissue distribution, expressed in fruits.

It catalyses the reaction Endohydrolysis of the N-glycosidic bond at one specific adenosine on the 28S rRNA.. Functionally, neu5Ac(alpha2-6)Gal/GalNAc specific agglutinin. Behaves as a type-2 ribosome-inactivating protein. Strongly inhibits mammalian but not plant ribosomes. The A chain is responsible for inhibiting protein synthesis through the catalytic inactivation of 60S ribosomal subunits by removing adenine from position 4,324 of 28S rRNA. The B chain binds to cell receptors and probably facilitates the entry into the cell of the A chain; B chains are also responsible for cell agglutination (lectin activity). Involved in plant defense against insects. Its function is as follows. Binds Neu5Ac(alpha2-6)Gal/GalNAc but has no clear agglutination activity. In Sambucus nigra (European elder), this protein is Ribosome-inactivating protein SNAIf.